Here is a 250-residue protein sequence, read N- to C-terminus: ATP synthase subunit a (250 aa).

5 consecutive transmembrane segments (helical) span residues 27-47 (TDTV…AFYL), 86-106 (FVLP…WLAV), 129-149 (INYV…AGIW), 191-211 (IFAG…IMWA), and 219-239 (FDLF…ILYF).

It belongs to the ATPase A chain family. F-type ATPases have 2 components, CF(1) - the catalytic core - and CF(0) - the membrane proton channel. CF(1) has five subunits: alpha(3), beta(3), gamma(1), delta(1), epsilon(1). CF(0) has three main subunits: a(1), b(2) and c(9-12). The alpha and beta chains form an alternating ring which encloses part of the gamma chain. CF(1) is attached to CF(0) by a central stalk formed by the gamma and epsilon chains, while a peripheral stalk is formed by the delta and b chains.

The protein resides in the cell membrane. Its function is as follows. Key component of the proton channel; it plays a direct role in the translocation of protons across the membrane. This chain is ATP synthase subunit a, found in Mycobacterium bovis (strain ATCC BAA-935 / AF2122/97).